The following is a 260-amino-acid chain: Late transcription factor 1 (260 aa).

Belongs to the chordopoxvirinae VLTF-1 family. Interacts with the late transcription factors VLTF-2 and VLTF-3. Interacts with the late transcription elongation factor H5/VLTF-4. Interacts with itself.

In terms of biological role, associates with RNA polymerase to initiate transcription from late gene promoters. The polypeptide is Late transcription factor 1 (VLTF1) (Vertebrata (FPV)).